The sequence spans 275 residues: Phosphonoacetaldehyde hydrolase (275 aa).

Asp15 acts as the Nucleophile in catalysis. Mg(2+) is bound by residues Asp15 and Ala17. Residue Lys56 is the Schiff-base intermediate with substrate of the active site. Asp189 provides a ligand contact to Mg(2+).

This sequence belongs to the HAD-like hydrolase superfamily. PhnX family. As to quaternary structure, homodimer. Mg(2+) serves as cofactor.

It carries out the reaction phosphonoacetaldehyde + H2O = acetaldehyde + phosphate + H(+). Involved in phosphonate degradation. The sequence is that of Phosphonoacetaldehyde hydrolase from Pseudomonas putida (strain ATCC 700007 / DSM 6899 / JCM 31910 / BCRC 17059 / LMG 24140 / F1).